Reading from the N-terminus, the 239-residue chain is MNIHLDKHGQGMPLVLFHGWGFDSQIWQPIIPYLKPKYQIILVDLPGFGLTPMMDWESFKKNLFDQLPDKFALAGWSMGGLYATRLAIEEPARVQYLINITSSPRFISDIDWPGVAEEVFVNFYNNLSKDINKTLKEFISLQLNKMKFDFKIGNPPSPEGLAFGLEILGTWDFREQLKQISIPTVYLFGRLDPITPAKTMAIMEKNYPNFKYVLFNRAAHMPFLSHTDLFITMMDEFIK.

Substrate contacts are provided by residues tryptophan 20, 77–78 (SM), and 138–142 (FISLQ). Serine 77 functions as the Nucleophile in the catalytic mechanism. Catalysis depends on residues aspartate 192 and histidine 220. Histidine 220 serves as a coordination point for substrate.

It belongs to the AB hydrolase superfamily. Carboxylesterase BioH family. In terms of assembly, monomer.

The protein resides in the cytoplasm. It carries out the reaction 6-carboxyhexanoyl-[ACP] methyl ester + H2O = 6-carboxyhexanoyl-[ACP] + methanol + H(+). Its pathway is cofactor biosynthesis; biotin biosynthesis. Functionally, the physiological role of BioH is to remove the methyl group introduced by BioC when the pimeloyl moiety is complete. It allows to synthesize pimeloyl-ACP via the fatty acid synthetic pathway through the hydrolysis of the ester bonds of pimeloyl-ACP esters. This Legionella pneumophila (strain Lens) protein is Pimeloyl-[acyl-carrier protein] methyl ester esterase.